The sequence spans 258 residues: UPF0246 protein VS_0505 (258 aa).

This sequence belongs to the UPF0246 family.

The chain is UPF0246 protein VS_0505 from Vibrio atlanticus (strain LGP32) (Vibrio splendidus (strain Mel32)).